The chain runs to 475 residues: Sulfate adenylyltransferase subunit 1 (475 aa).

Residues 25-239 enclose the tr-type G domain; that stretch reads KSLLRFLTCG…EVLETVEIQR (215 aa). Residues 34–41 form a G1 region; that stretch reads GSVDDGKS. Residue 34-41 coordinates GTP; sequence GSVDDGKS. A G2 region spans residues 92–96; sequence GITID. The tract at residues 113–116 is G3; the sequence is DTPG. GTP-binding positions include 113-117 and 168-171; these read DTPGH and NKMD. The segment at 168-171 is G4; sequence NKMD. Positions 206 to 208 are G5; the sequence is SAL.

The protein belongs to the TRAFAC class translation factor GTPase superfamily. Classic translation factor GTPase family. CysN/NodQ subfamily. As to quaternary structure, heterodimer composed of CysD, the smaller subunit, and CysN.

It catalyses the reaction sulfate + ATP + H(+) = adenosine 5'-phosphosulfate + diphosphate. The protein operates within sulfur metabolism; hydrogen sulfide biosynthesis; sulfite from sulfate: step 1/3. With CysD forms the ATP sulfurylase (ATPS) that catalyzes the adenylation of sulfate producing adenosine 5'-phosphosulfate (APS) and diphosphate, the first enzymatic step in sulfur assimilation pathway. APS synthesis involves the formation of a high-energy phosphoric-sulfuric acid anhydride bond driven by GTP hydrolysis by CysN coupled to ATP hydrolysis by CysD. This chain is Sulfate adenylyltransferase subunit 1, found in Escherichia coli (strain UTI89 / UPEC).